The chain runs to 366 residues: Galactoside alpha-(1,2)-fucosyltransferase 1 (366 aa).

Residues 1-8 lie on the Cytoplasmic side of the membrane; that stretch reads MWPLSHRH. Residues 9–25 traverse the membrane as a helical; Signal-anchor for type II membrane protein segment; that stretch reads LCLAFLLVCVLSAISFF. At 26-366 the chain is on the lumenal side; sequence LHVHQDSFRH…LSPLWTLAEP (341 aa). Residues asparagine 66, asparagine 302, and asparagine 328 are each glycosylated (N-linked (GlcNAc...) asparagine).

The protein belongs to the glycosyltransferase 11 family.

The protein resides in the golgi apparatus. It localises to the golgi stack membrane. It catalyses the reaction a beta-D-galactosyl-(1-&gt;4)-N-acetyl-beta-D-glucosaminyl derivative + GDP-beta-L-fucose = an alpha-L-Fuc-(1-&gt;2)-beta-D-Gal-(1-&gt;4)-beta-D-GlcNAc derivative + GDP + H(+). The catalysed reaction is a ganglioside GA1 + GDP-beta-L-fucose = a ganglioside Fuc-GA1 + GDP + H(+). The enzyme catalyses a beta-D-Gal-(1-&gt;3)-beta-D-GlcNAc-(1-&gt;3)-beta-D-Gal-(1-&gt;4)-beta-D-Glc-(1&lt;-&gt;1')-Cer(d18:1(4E)) + GDP-beta-L-fucose = alpha-L-fucosyl-(1-&gt;2)- beta-D-galactosyl-(1-&gt;3)-N-acetyl-beta-D-glucosaminyl-(1-&gt;3)-beta-D-galactosyl-(1-&gt;4)-beta-D-glucosyl-(1&lt;-&gt;1')-N-acylsphing-4-enine + GDP + H(+). It carries out the reaction a neolactoside nLc4Cer(d18:1(4E)) + GDP-beta-L-fucose = a neolactoside IV(2)-alpha-Fuc-nLc4Cer(d18:1(4E)) + GDP + H(+). It catalyses the reaction a ganglioside GM1 + GDP-beta-L-fucose = a ganglioside Fuc-GM1 + GDP + H(+). The catalysed reaction is beta-D-galactosyl-(1-&gt;3)-N-acetyl-D-galactosamine + GDP-beta-L-fucose = alpha-L-fucosyl-(1-&gt;2)-beta-D-galactosyl-(1-&gt;3)-N-acetyl-D-galactosamine + GDP + H(+). It participates in protein modification; protein glycosylation. Functionally, catalyzes the transfer of L-fucose, from a guanosine diphosphate-beta-L-fucose, to the terminal galactose residue of glycoconjugates through an alpha(1,2) linkage leading to H antigen synthesis that is an intermediate substrate in the synthesis of ABO blood group antigens. H antigen is essential for maturation of the glomerular layer of the main olfactory bulb, in cell migration and early cell-cell contacts during tumor associated angiogenesis. Preferentially fucosylates soluble lactose and to a lesser extent fucosylates glycolipids gangliosides GA1 and GM1a. The polypeptide is Galactoside alpha-(1,2)-fucosyltransferase 1 (Alouatta caraya (Black howler monkey)).